Reading from the N-terminus, the 377-residue chain is Flap endonuclease 1 (377 aa).

The N-domain stretch occupies residues 1–105 (MGIKGLNAII…HELSKRTARR (105 aa)). Residue Asp34 participates in Mg(2+) binding. Residues Arg47 and Arg71 each coordinate DNA. Asp87 lines the Mg(2+) pocket. The disordered stretch occupies residues 99 to 119 (SKRTARREETEKKLQEATDQA). Residues 120 to 251 (EKMKQERRLV…VTALKLIKEY (132 aa)) are I-domain. Residues Glu156, Glu158, Asp177, and Asp179 each coordinate Mg(2+). Glu156 is a binding site for DNA. The DNA site is built by Gly229 and Asp231. Mg(2+) is bound at residue Asp231. Positions 338–346 (VQGRLDGFF) are interaction with PCNA.

The protein belongs to the XPG/RAD2 endonuclease family. FEN1 subfamily. In terms of assembly, interacts with PCNA. Three molecules of FEN1 bind to one PCNA trimer with each molecule binding to one PCNA monomer. PCNA stimulates the nuclease activity without altering cleavage specificity. Mg(2+) is required as a cofactor. In terms of processing, phosphorylated. Phosphorylation upon DNA damage induces relocalization to the nuclear plasma.

The protein localises to the nucleus. It is found in the nucleolus. It localises to the nucleoplasm. The protein resides in the mitochondrion. In terms of biological role, structure-specific nuclease with 5'-flap endonuclease and 5'-3' exonuclease activities involved in DNA replication and repair. During DNA replication, cleaves the 5'-overhanging flap structure that is generated by displacement synthesis when DNA polymerase encounters the 5'-end of a downstream Okazaki fragment. It enters the flap from the 5'-end and then tracks to cleave the flap base, leaving a nick for ligation. Also involved in the long patch base excision repair (LP-BER) pathway, by cleaving within the apurinic/apyrimidinic (AP) site-terminated flap. Acts as a genome stabilization factor that prevents flaps from equilibrating into structures that lead to duplications and deletions. Also possesses 5'-3' exonuclease activity on nicked or gapped double-stranded DNA, and exhibits RNase H activity. Also involved in replication and repair of rDNA and in repairing mitochondrial DNA. The protein is Flap endonuclease 1 of Vanderwaltozyma polyspora (strain ATCC 22028 / DSM 70294 / BCRC 21397 / CBS 2163 / NBRC 10782 / NRRL Y-8283 / UCD 57-17) (Kluyveromyces polysporus).